The following is a 291-amino-acid chain: uncharacterized protein (291 aa).

Positions 68-205 (PVAVSASFLW…VIQLWARPRG (138 aa)) constitute a DAGKc domain.

This is an uncharacterized protein from Mycobacterium tuberculosis (strain CDC 1551 / Oshkosh).